A 505-amino-acid polypeptide reads, in one-letter code: RNA-splicing ligase RtcB homolog (505 aa).

Residues D119, C122, H227, and H259 each contribute to the Mn(2+) site. Residue N226–E230 participates in GMP binding. S300 carries the post-translational modification Phosphoserine. Residue H353 participates in Mn(2+) binding. GMP is bound by residues H353 to N354, G402 to M405, S409, and H428 to G431. Residue H428 is the GMP-histidine intermediate of the active site. A Glycyl lysine isopeptide (Lys-Gly) (interchain with G-Cter in SUMO2) cross-link involves residue K496. K504 is a binding site for GMP.

The protein belongs to the RtcB family. Catalytic component of the tRNA-splicing ligase complex. It depends on Mn(2+) as a cofactor.

The protein localises to the nucleus. It localises to the cytoplasm. It carries out the reaction a 3'-end 3'-phospho-ribonucleotide-RNA + a 5'-end dephospho-ribonucleoside-RNA + GTP = a ribonucleotidyl-ribonucleotide-RNA + GMP + diphosphate. The enzyme catalyses a 3'-end 2',3'-cyclophospho-ribonucleotide-RNA + a 5'-end dephospho-ribonucleoside-RNA + GTP + H2O = a ribonucleotidyl-ribonucleotide-RNA + GMP + diphosphate + H(+). Functionally, catalytic subunit of the tRNA-splicing ligase complex that acts by directly joining spliced tRNA halves to mature-sized tRNAs by incorporating the precursor-derived splice junction phosphate into the mature tRNA as a canonical 3',5'-phosphodiester. May act as an RNA ligase with broad substrate specificity, and may function toward other RNAs. This chain is RNA-splicing ligase RtcB homolog, found in Rattus norvegicus (Rat).